We begin with the raw amino-acid sequence, 260 residues long: Thiazole synthase (260 aa).

The Schiff-base intermediate with DXP role is filled by lysine 96. 1-deoxy-D-xylulose 5-phosphate-binding positions include glycine 157, 184–185, and 206–207; these read AG and NT.

The protein belongs to the ThiG family. In terms of assembly, homotetramer. Forms heterodimers with either ThiH or ThiS.

It is found in the cytoplasm. It catalyses the reaction [ThiS sulfur-carrier protein]-C-terminal-Gly-aminoethanethioate + 2-iminoacetate + 1-deoxy-D-xylulose 5-phosphate = [ThiS sulfur-carrier protein]-C-terminal Gly-Gly + 2-[(2R,5Z)-2-carboxy-4-methylthiazol-5(2H)-ylidene]ethyl phosphate + 2 H2O + H(+). The protein operates within cofactor biosynthesis; thiamine diphosphate biosynthesis. In terms of biological role, catalyzes the rearrangement of 1-deoxy-D-xylulose 5-phosphate (DXP) to produce the thiazole phosphate moiety of thiamine. Sulfur is provided by the thiocarboxylate moiety of the carrier protein ThiS. In vitro, sulfur can be provided by H(2)S. The sequence is that of Thiazole synthase from Bradyrhizobium sp. (strain BTAi1 / ATCC BAA-1182).